The sequence spans 300 residues: MERKLHLPAKPERHRRFGSVEAVKGIKPTDKEQMKDIQNTPNDYFFDIDHVGVSNVSHPILIASSLKPFTQTTIGAFSFTTSLARDRKGINMSRLTEQLQRYHEANWTVDFHTLKDFAKDLAGNMEQESASVSVSFPWYFERISPETKLSGLMHADIHMTVSYHENKGFSQTAGITAHATTLCPCSKEISEYSAHNQRGIIKITAHINEQAEMPDDFKAELLAAAETNASAKLHPVLKRPDEKRVTEQAYENPRFVEDVLRLTAADLYEMDWISAFEIECRNEESIHLHDAVARLSFSKC.

This sequence belongs to the GTP cyclohydrolase IV family.

It carries out the reaction GTP + H2O = 7,8-dihydroneopterin 3'-triphosphate + formate + H(+). The protein operates within cofactor biosynthesis; 7,8-dihydroneopterin triphosphate biosynthesis; 7,8-dihydroneopterin triphosphate from GTP: step 1/1. In terms of biological role, converts GTP to 7,8-dihydroneopterin triphosphate. This is GTP cyclohydrolase FolE2 from Bacillus licheniformis (strain ATCC 14580 / DSM 13 / JCM 2505 / CCUG 7422 / NBRC 12200 / NCIMB 9375 / NCTC 10341 / NRRL NRS-1264 / Gibson 46).